Here is a 397-residue protein sequence, read N- to C-terminus: MAKGSAGDAPNTRDTSFKRPKIRESCTHCSSQKIRCTKERPACARCVNKGLLCQYNISRRTGTRRHSVRATPEPETTISNAPTSSVAPDSVKIDGKRSPAMSDFALLDGLETFDNSLWHQPITTDIQDIDMQYFDFFDPGGYQAEPEPINSFDIDSTLLCGTSTAGYLPELDAEASTRPSSSSSPPSQRSDGGRATTHGGGGCISTALQIFSELHVSSSACPIAAGAPSHNIREFDHVLDSNRAALEKLSSILDCPPCCHDQEVLTALFLAVQKALSWYSAALDVAGDGEPTSPSSRVKSPPAFLGSYALGAQAQTLARAYVVMAQLQQHFQPLLAKLQRISSLSALGARSSSTTSLSSVSSLQSSTSGSAVIECQKRALQEALEDVVAKIEGIKRG.

Residues 26-53 constitute a DNA-binding region (zn(2)-C6 fungal-type); sequence CTHCSSQKIRCTKERPACARCVNKGLLC. Disordered regions lie at residues 63-90 and 173-198; these read TRRH…APDS and AEAS…ATTH. Residues 74 to 87 are compositionally biased toward polar residues; the sequence is PETTISNAPTSSVA. The segment covering 179–197 has biased composition (low complexity); that stretch reads PSSSSSPPSQRSDGGRATT.

It is found in the nucleus. Transcription regulator of the gene cluster that mediates the biosynthesis of cercosporin, a light-activated, non-host-selective toxin. The perylenequinone chromophore of cercosporin absorbs light energy to attain an electronically-activated triplet state and produces active oxygen species such as the hydroxyl radical, superoxide, hydrogen peroxide or singlet oxygen upon reaction with oxygen molecules. These reactive oxygen species cause damage to various cellular components including lipids, proteins and nucleic acids. This is Cercosporin biosynthesis regulatory protein CTB8 from Cercospora beticola (Sugarbeet leaf spot fungus).